The primary structure comprises 359 residues: Ribosomal RNA small subunit methyltransferase mra1 (359 aa).

The span at 1–10 (MPTYSKRKSR) shows a compositional bias: basic residues. Disordered regions lie at residues 1–62 (MPTY…EDEE) and 98–118 (VKSDEEKEDPNGASSKTVKAR). Position 12 is a phosphoserine (S12). Positions 18–39 (KTNQPKFIKRSQSSETITSGET) are enriched in polar residues. Residue T33 is modified to Phosphothreonine. Residue S100 is modified to Phosphoserine. Residues L287, G314, 319-321 (GPD), and 334-339 (ISDYPL) contribute to the S-adenosyl-L-methionine site.

Belongs to the class IV-like SAM-binding methyltransferase superfamily. RNA methyltransferase NEP1 family. In terms of assembly, homodimer.

The protein localises to the nucleus. It is found in the nucleolus. The catalysed reaction is a pseudouridine in rRNA + S-adenosyl-L-methionine = an N(1)-methylpseudouridine in rRNA + S-adenosyl-L-homocysteine + H(+). S-adenosyl-L-methionine-dependent pseudouridine N(1)-methyltransferase that methylates the pseudouridine corresponding to position 1189 (Psi1189) in S.cerevisiae 18S rRNA. Involved the biosynthesis of the hypermodified N1-methyl-N3-(3-amino-3-carboxypropyl) pseudouridine (m1acp3-Psi) conserved in eukaryotic 18S rRNA. Also has an essential role in 40S ribosomal subunit biogenesis independent on its methyltransferase activity, facilitating the incorporation of ribosomal protein S19 during the formation of pre-ribosomes. Essential for cell growth. It also has a key role in promoting the mating function. The protein is Ribosomal RNA small subunit methyltransferase mra1 of Schizosaccharomyces pombe (strain 972 / ATCC 24843) (Fission yeast).